The chain runs to 353 residues: Photosystem II D2 protein (353 aa).

Residue threonine 2 is modified to N-acetylthreonine. Threonine 2 bears the Phosphothreonine mark. A helical transmembrane segment spans residues cysteine 41 to threonine 61. Histidine 118 contacts chlorophyll a. A helical transmembrane segment spans residues glycine 125 to proline 141. 2 residues coordinate pheophytin a: glutamine 130 and asparagine 143. A helical transmembrane segment spans residues valine 153 to serine 166. Histidine 198 provides a ligand contact to chlorophyll a. Residues alanine 208–aspartate 228 traverse the membrane as a helical segment. Residues histidine 215 and phenylalanine 262 each coordinate a plastoquinone. Histidine 215 serves as a coordination point for Fe cation. Fe cation is bound at residue histidine 269. The chain crosses the membrane as a helical span at residues glycine 279–arginine 295.

Belongs to the reaction center PufL/M/PsbA/D family. As to quaternary structure, PSII is composed of 1 copy each of membrane proteins PsbA, PsbB, PsbC, PsbD, PsbE, PsbF, PsbH, PsbI, PsbJ, PsbK, PsbL, PsbM, PsbT, PsbX, PsbY, PsbZ, Psb30/Ycf12, at least 3 peripheral proteins of the oxygen-evolving complex and a large number of cofactors. It forms dimeric complexes. It depends on The D1/D2 heterodimer binds P680, chlorophylls that are the primary electron donor of PSII, and subsequent electron acceptors. It shares a non-heme iron and each subunit binds pheophytin, quinone, additional chlorophylls, carotenoids and lipids. There is also a Cl(-1) ion associated with D1 and D2, which is required for oxygen evolution. The PSII complex binds additional chlorophylls, carotenoids and specific lipids. as a cofactor.

It is found in the plastid. The protein resides in the chloroplast thylakoid membrane. The catalysed reaction is 2 a plastoquinone + 4 hnu + 2 H2O = 2 a plastoquinol + O2. Functionally, photosystem II (PSII) is a light-driven water:plastoquinone oxidoreductase that uses light energy to abstract electrons from H(2)O, generating O(2) and a proton gradient subsequently used for ATP formation. It consists of a core antenna complex that captures photons, and an electron transfer chain that converts photonic excitation into a charge separation. The D1/D2 (PsbA/PsbD) reaction center heterodimer binds P680, the primary electron donor of PSII as well as several subsequent electron acceptors. D2 is needed for assembly of a stable PSII complex. The protein is Photosystem II D2 protein of Tetradesmus obliquus (Green alga).